The sequence spans 426 residues: MDKGRCTILNSEELWAQARQLFAGGVNSPVRAAVKPFPFYVERGKGAYIYTVEGNKFIDYVLGYGPLILGHSPESVKRKIIEQLEKGWLFGTPSKLEIELAKKISSHIPSAQKIRFVNSGTEATMAAIRLARGYSKRSKILKFSGNYHGAHDYTLVEAGSAATEYNVTTSDGIPMEIMKTIEICEFNDLDCVDKKLRNEDIAAALLEPIMGNAGVILPEKGFLSGLRELTKSYNSLLIFDEVITGFRIDIGGAQSYYQIYPDITTLGKIIGGGFPIGAVAGKAEIIDNFTPAGRVFNAGTFNANPISMIAGIATIEELEKEYPYNIANKASKTLVEELERLLKIKHTINHIGSMFQVFFGIDKVRNYSDAKRANKEYYIKFHERLLKERVFIPPSQYETIFTSAAHEDDVVNDTIDKLAKVIGELS.

Lys268 carries the N6-(pyridoxal phosphate)lysine modification.

This sequence belongs to the class-III pyridoxal-phosphate-dependent aminotransferase family. HemL subfamily. Pyridoxal 5'-phosphate serves as cofactor.

It is found in the cytoplasm. The enzyme catalyses (S)-4-amino-5-oxopentanoate = 5-aminolevulinate. It functions in the pathway porphyrin-containing compound metabolism; protoporphyrin-IX biosynthesis; 5-aminolevulinate from L-glutamyl-tRNA(Glu): step 2/2. This Saccharolobus islandicus (strain M.16.27) (Sulfolobus islandicus) protein is Glutamate-1-semialdehyde 2,1-aminomutase.